The sequence spans 600 residues: MNKNITIDELRSKYIDFFKSKGHVEISGRSLIPENDPTVLFTTAGMHPLVPYLMGEPHPAGTRLTDVQKCVRTGDIDDVGDASHLTFFEMLGNWSLGDYFKKESIAYSFEFLTDEKYLGIPIDKLSFTVFEGNEDAPRDEESASIWESLGVSKDRIFFLPKEDNWWGPAGETGPCGPDTEIFIDTGKPACGSNCRPGCNCGKYVEIWNNVFMQYHKNMDGSYSPLKRKCVDTGMGVERTVAMLQGKPSVYNTEAFTSIIKSIEDISGVKYGDNEKTDTSIRIIADHVRTACFILGDPKTTLPSNIGAGYVLRRLIRRAVRHGKKLGIDGNFLSVPASAVIAQNAGFYTELKENETLILTELKAEEDKFLETLKKGEAEFEKMLPNLLKNPKKIIPGRMAFKLYDTYGFPIELTEELASESGLTVNREEFDEAFKKHQELSRAGSEQVFKGGLADHSEQTTAYHTATHLLHKALRMVLGDHVQQKGSNITAERLRFDFSHPEPMTEAEKKEVERLVNEAIKADLPVTMEVMPLEEAKKIGAMALFGEKYEDVVKVYKIGDFSTEVCGGPHVERTGSLGRFCIKKEQSSSSGVRRIRAVLEH.

Residues His463, His467, Cys565, and His569 each coordinate Zn(2+).

Belongs to the class-II aminoacyl-tRNA synthetase family. Requires Zn(2+) as cofactor.

The protein resides in the cytoplasm. The catalysed reaction is tRNA(Ala) + L-alanine + ATP = L-alanyl-tRNA(Ala) + AMP + diphosphate. Its function is as follows. Catalyzes the attachment of alanine to tRNA(Ala) in a two-step reaction: alanine is first activated by ATP to form Ala-AMP and then transferred to the acceptor end of tRNA(Ala). Also edits incorrectly charged Ser-tRNA(Ala) and Gly-tRNA(Ala) via its editing domain. The chain is Alanine--tRNA ligase (alaS) from Treponema denticola (strain ATCC 35405 / DSM 14222 / CIP 103919 / JCM 8153 / KCTC 15104).